The following is a 135-amino-acid chain: Large ribosomal subunit protein uL16c (135 aa).

The segment at Met1–Lys20 is disordered.

The protein belongs to the universal ribosomal protein uL16 family. In terms of assembly, part of the 50S ribosomal subunit.

Its subcellular location is the plastid. The protein localises to the chloroplast. The chain is Large ribosomal subunit protein uL16c from Landoltia punctata (Dotted duckmeat).